A 278-amino-acid polypeptide reads, in one-letter code: Urease accessory protein UreD (278 aa).

Belongs to the UreD family. As to quaternary structure, ureD, UreF and UreG form a complex that acts as a GTP-hydrolysis-dependent molecular chaperone, activating the urease apoprotein by helping to assemble the nickel containing metallocenter of UreC. The UreE protein probably delivers the nickel.

It is found in the cytoplasm. Its function is as follows. Required for maturation of urease via the functional incorporation of the urease nickel metallocenter. This chain is Urease accessory protein UreD, found in Staphylococcus epidermidis (strain ATCC 12228 / FDA PCI 1200).